We begin with the raw amino-acid sequence, 130 residues long: DNA-directed RNA polymerase subunit omega (130 aa).

The interval 110–130 (EELLKGLEGLAPPEEQPEEDE) is disordered.

The protein belongs to the RNA polymerase subunit omega family. As to quaternary structure, the RNAP catalytic core consists of 2 alpha, 1 beta, 1 beta' and 1 omega subunit. When a sigma factor is associated with the core the holoenzyme is formed, which can initiate transcription.

The catalysed reaction is RNA(n) + a ribonucleoside 5'-triphosphate = RNA(n+1) + diphosphate. Its function is as follows. Promotes RNA polymerase assembly. Latches the N- and C-terminal regions of the beta' subunit thereby facilitating its interaction with the beta and alpha subunits. The chain is DNA-directed RNA polymerase subunit omega from Rhodopseudomonas palustris (strain HaA2).